The chain runs to 68 residues: Large ribosomal subunit protein bL35 (68 aa).

The protein belongs to the bacterial ribosomal protein bL35 family.

This chain is Large ribosomal subunit protein bL35, found in Rickettsia conorii (strain ATCC VR-613 / Malish 7).